The chain runs to 207 residues: Ribosomal RNA large subunit methyltransferase E (207 aa).

5 residues coordinate S-adenosyl-L-methionine: glycine 60, tryptophan 62, aspartate 80, aspartate 96, and aspartate 121. Lysine 161 serves as the catalytic Proton acceptor.

It belongs to the class I-like SAM-binding methyltransferase superfamily. RNA methyltransferase RlmE family.

It is found in the cytoplasm. The enzyme catalyses uridine(2552) in 23S rRNA + S-adenosyl-L-methionine = 2'-O-methyluridine(2552) in 23S rRNA + S-adenosyl-L-homocysteine + H(+). Its function is as follows. Specifically methylates the uridine in position 2552 of 23S rRNA at the 2'-O position of the ribose in the fully assembled 50S ribosomal subunit. The polypeptide is Ribosomal RNA large subunit methyltransferase E (Azotobacter vinelandii (strain DJ / ATCC BAA-1303)).